The sequence spans 149 residues: 3-hydroxyacyl-[acyl-carrier-protein] dehydratase FabZ (149 aa).

H49 is a catalytic residue.

Belongs to the thioester dehydratase family. FabZ subfamily.

The protein localises to the cytoplasm. It catalyses the reaction a (3R)-hydroxyacyl-[ACP] = a (2E)-enoyl-[ACP] + H2O. Its function is as follows. Involved in unsaturated fatty acids biosynthesis. Catalyzes the dehydration of short chain beta-hydroxyacyl-ACPs and long chain saturated and unsaturated beta-hydroxyacyl-ACPs. The sequence is that of 3-hydroxyacyl-[acyl-carrier-protein] dehydratase FabZ from Sulfurovum sp. (strain NBC37-1).